The following is a 222-amino-acid chain: Peroxisomal membrane protein 11-4 (222 aa).

Over 1 to 81 (MSAGDTLDKL…LNGLRRAPGE (81 aa)) the chain is Cytoplasmic. The helical transmembrane segment at 82 to 102 (FGALAVLANAGEMVYFFFDHF) threads the bilayer. Residues 103–196 (TWLSRVGVLD…IGIADIEPNP (94 aa)) lie on the Lumenal side of the membrane. A helical transmembrane segment spans residues 197 to 217 (FCNHAVTLGISGLVSAWAGWY). Topologically, residues 218–222 (RNWPS) are cytoplasmic.

The protein belongs to the peroxin-11 family. As to expression, expressed in seedlings, shoots, leaf sheaths and flag leaf.

It is found in the peroxisome membrane. Its function is as follows. Involved in peroxisomal proliferation. This Oryza sativa subsp. indica (Rice) protein is Peroxisomal membrane protein 11-4 (PEX11-4).